The sequence spans 460 residues: uncharacterized protein (460 aa).

The 59-residue stretch at 6-64 (PVKKNNDYEIYIDDFGNMGEGIGKIDNFTVFVKDAVKGEKVRAKIIKVNKSFAIGKLID) folds into the TRAM domain. [4Fe-4S] cluster is bound by residues Cys-77, Cys-83, Cys-86, and Cys-166. Residues Gln-290, Tyr-319, Glu-340, and Asp-388 each coordinate S-adenosyl-L-methionine. Cys-415 serves as the catalytic Nucleophile.

This sequence belongs to the class I-like SAM-binding methyltransferase superfamily. RNA M5U methyltransferase family.

This is an uncharacterized protein from Clostridium acetobutylicum (strain ATCC 824 / DSM 792 / JCM 1419 / IAM 19013 / LMG 5710 / NBRC 13948 / NRRL B-527 / VKM B-1787 / 2291 / W).